A 639-amino-acid chain; its full sequence is Extracellular metalloproteinase 9 (639 aa).

An N-terminal signal peptide occupies residues 1–19 (MHGLLLAAGLLSLPLRALG). The propeptide occupies 20–250 (HPNPNPQMHT…IHGVVDYVAD (231 aa)). N-linked (GlcNAc...) asparagine glycosylation is present at Asn-278. The interval 293 to 312 (PTTRGNNGIAQDNPSGGNQY) is disordered. Residue His-434 coordinates Zn(2+). Glu-435 is a catalytic residue. His-438 is a Zn(2+) binding site.

Belongs to the peptidase M36 family. The cofactor is Zn(2+).

It localises to the secreted. Functionally, secreted metalloproteinase that allows assimilation of proteinaceous substrates and probably acts as a virulence factor. The polypeptide is Extracellular metalloproteinase 9 (MEP9) (Coccidioides posadasii (strain C735) (Valley fever fungus)).